The sequence spans 406 residues: LIM/homeobox protein Lhx1 (406 aa).

LIM zinc-binding domains follow at residues cysteine 4–aspartate 54 and cysteine 63–aspartate 117. 2 disordered regions span residues asparagine 128–isoleucine 187 and tyrosine 293–glycine 374. The span at serine 137–proline 148 shows a compositional bias: low complexity. The segment covering aspartate 151–glycine 167 has biased composition (basic and acidic residues). Phosphoserine is present on serine 162. A DNA-binding region (homeobox) is located at residues arginine 180–lysine 239. Low complexity predominate over residues proline 315–leucine 327. Positions glycine 352–proline 362 are enriched in pro residues.

In terms of assembly, interacts with LDB1 via the tandem LIM domains. As to expression, expressed in the brain, thymus, and tonsils. Expressed in samples from patients with chronic myeloid leukemia (CML) and in 58% of acute myeloid leukemia (AML) cell lines.

It localises to the nucleus. In terms of biological role, potential transcription factor. May play a role in early mesoderm formation and later in lateral mesoderm differentiation and neurogenesis. The chain is LIM/homeobox protein Lhx1 (LHX1) from Homo sapiens (Human).